A 176-amino-acid chain; its full sequence is Large ribosomal subunit protein eL20 (176 aa).

Lys11 is covalently cross-linked (Glycyl lysine isopeptide (Lys-Gly) (interchain with G-Cter in SUMO2)). Tyr63 carries the phosphotyrosine modification. Ser71 bears the Phosphoserine mark. Lys76 carries the N6-succinyllysine modification. A Phosphoserine modification is found at Ser123. Glycyl lysine isopeptide (Lys-Gly) (interchain with G-Cter in SUMO2) cross-links involve residues Lys128 and Lys170.

The protein belongs to the eukaryotic ribosomal protein eL20 family. As to quaternary structure, component of the large ribosomal subunit. Binds IPO9 with high affinity.

The protein localises to the cytoplasm. Its function is as follows. Component of the large ribosomal subunit. The ribosome is a large ribonucleoprotein complex responsible for the synthesis of proteins in the cell. The protein is Large ribosomal subunit protein eL20 (RPL18A) of Bos taurus (Bovine).